Consider the following 419-residue polypeptide: N-acylglucosamine 2-epimerase (419 aa).

A leucine-zipper region spans residues 185–206; sequence LLNLVEQLGEEDEEMTDKYAEL. Residue Ser418 is modified to Phosphoserine.

It belongs to the N-acylglucosamine 2-epimerase family. Homodimer. Forms a heterodimer with renin and inhibits its activity. Kidney, adrenal gland, brain, lung, spleen, ovary, testis and heart.

It carries out the reaction an N-acyl-D-glucosamine = an N-acyl-D-mannosamine. It functions in the pathway amino-sugar metabolism; N-acetylneuraminate degradation. Catalyzes the interconversion of N-acetylglucosamine to N-acetylmannosamine. Involved in the N-glycolylneuraminic acid (Neu5Gc) degradation pathway. The chain is N-acylglucosamine 2-epimerase (Renbp) from Rattus norvegicus (Rat).